We begin with the raw amino-acid sequence, 463 residues long: Argininosuccinate lyase (463 aa).

It belongs to the lyase 1 family. Argininosuccinate lyase subfamily.

It localises to the cytoplasm. It catalyses the reaction 2-(N(omega)-L-arginino)succinate = fumarate + L-arginine. Its pathway is amino-acid biosynthesis; L-arginine biosynthesis; L-arginine from L-ornithine and carbamoyl phosphate: step 3/3. The chain is Argininosuccinate lyase from Bradyrhizobium sp. (strain BTAi1 / ATCC BAA-1182).